The chain runs to 281 residues: Thioesterase PikA5 (281 aa).

A thioesterase region spans residues 26–249; sequence RLVCLPHAGG…WHEICNDISD (224 aa). The active-site Nucleophile; for thioesterase activity is Ser-99. Residue His-233 is the Proton acceptor; for thioesterase activity of the active site.

The protein belongs to the thioesterase family.

The protein operates within antibiotic biosynthesis. In terms of biological role, involved in the biosynthesis of 12- and 14-membered ring macrolactone antibiotics such as methymycin, neomethymycin, narbomycin and pikromycin. Responsible for removing mis-formed acyl moieties (aberrant decarboxylation) that are bound to the PKS and could block it. Catalyzes the cleavage of methylmalonyl-[acp]. It exhibits some acyl-group specificity, and catalyzes the cleavage of propionyl and butyryl derivatives faster than acetyl malonyl or methylmalonyl derivatives. This chain is Thioesterase PikA5, found in Streptomyces venezuelae.